Here is a 365-residue protein sequence, read N- to C-terminus: UDP-N-acetylglucosamine--N-acetylmuramyl-(pentapeptide) pyrophosphoryl-undecaprenol N-acetylglucosamine transferase (365 aa).

UDP-N-acetyl-alpha-D-glucosamine is bound by residues 12 to 14, asparagine 123, arginine 166, serine 194, and glutamine 295; that span reads TGG.

This sequence belongs to the glycosyltransferase 28 family. MurG subfamily.

It localises to the cell inner membrane. It catalyses the reaction di-trans,octa-cis-undecaprenyl diphospho-N-acetyl-alpha-D-muramoyl-L-alanyl-D-glutamyl-meso-2,6-diaminopimeloyl-D-alanyl-D-alanine + UDP-N-acetyl-alpha-D-glucosamine = di-trans,octa-cis-undecaprenyl diphospho-[N-acetyl-alpha-D-glucosaminyl-(1-&gt;4)]-N-acetyl-alpha-D-muramoyl-L-alanyl-D-glutamyl-meso-2,6-diaminopimeloyl-D-alanyl-D-alanine + UDP + H(+). The protein operates within cell wall biogenesis; peptidoglycan biosynthesis. Its function is as follows. Cell wall formation. Catalyzes the transfer of a GlcNAc subunit on undecaprenyl-pyrophosphoryl-MurNAc-pentapeptide (lipid intermediate I) to form undecaprenyl-pyrophosphoryl-MurNAc-(pentapeptide)GlcNAc (lipid intermediate II). The polypeptide is UDP-N-acetylglucosamine--N-acetylmuramyl-(pentapeptide) pyrophosphoryl-undecaprenol N-acetylglucosamine transferase (Phenylobacterium zucineum (strain HLK1)).